The primary structure comprises 739 residues: Polyribonucleotide nucleotidyltransferase (739 aa).

Mg(2+)-binding residues include D487 and D493. A KH domain is found at 554-613; that stretch reads PRIETMQIPTDKIRDVIGTGGKVIREIVEKTGAKINIEDTGVVKIASADGKAIKAAYNWI. The S1 motif domain maps to 623–691; that stretch reads GVIYDGTIVK…DRGKIRLSMK (69 aa). Residues 694-739 form a disordered region; the sequence is DQQTGEDITDKIKAQRDAERAERGDEPREPREGGRHRGERRREAGE. Positions 701-739 are enriched in basic and acidic residues; the sequence is ITDKIKAQRDAERAERGDEPREPREGGRHRGERRREAGE.

This sequence belongs to the polyribonucleotide nucleotidyltransferase family. Mg(2+) serves as cofactor.

It localises to the cytoplasm. The catalysed reaction is RNA(n+1) + phosphate = RNA(n) + a ribonucleoside 5'-diphosphate. Functionally, involved in mRNA degradation. Catalyzes the phosphorolysis of single-stranded polyribonucleotides processively in the 3'- to 5'-direction. This Methylobacterium radiotolerans (strain ATCC 27329 / DSM 1819 / JCM 2831 / NBRC 15690 / NCIMB 10815 / 0-1) protein is Polyribonucleotide nucleotidyltransferase.